The chain runs to 28 residues: Dermaseptin-SP1 (28 aa).

Expressed by the skin glands.

Its subcellular location is the secreted. Functionally, probable antimicrobial peptide which stimulates insulin-release in glucose-responsive BRIN-BD 11 cells. This chain is Dermaseptin-SP1, found in Agalychnis spurrelli (Gliding leaf frog).